Here is a 103-residue protein sequence, read N- to C-terminus: Small ribosomal subunit protein uS10 (103 aa).

The protein belongs to the universal ribosomal protein uS10 family. In terms of assembly, part of the 30S ribosomal subunit.

Its function is as follows. Involved in the binding of tRNA to the ribosomes. The polypeptide is Small ribosomal subunit protein uS10 (Chlorobaculum tepidum (strain ATCC 49652 / DSM 12025 / NBRC 103806 / TLS) (Chlorobium tepidum)).